The primary structure comprises 258 residues: 14-3-3-like protein F (258 aa).

This sequence belongs to the 14-3-3 family.

This chain is 14-3-3-like protein F, found in Nicotiana tabacum (Common tobacco).